The following is a 138-amino-acid chain: ATP synthase epsilon chain (138 aa).

The protein belongs to the ATPase epsilon chain family. F-type ATPases have 2 components, CF(1) - the catalytic core - and CF(0) - the membrane proton channel. CF(1) has five subunits: alpha(3), beta(3), gamma(1), delta(1), epsilon(1). CF(0) has four main subunits: a(1), b(1), b'(1) and c(9-12).

Its subcellular location is the cellular thylakoid membrane. Functionally, produces ATP from ADP in the presence of a proton gradient across the membrane. In terms of biological role, the complex from the organism is particularly stable to disruption and remains functional after 6 hours at 55 degrees Celsius. This Thermosynechococcus vestitus (strain NIES-2133 / IAM M-273 / BP-1) protein is ATP synthase epsilon chain.